The following is a 267-amino-acid chain: MNKLENKVALVTSATRGIGLASAIKLAQNGAIVYMGVRRLEATQEICDKYKEEGLILKPVFFDAYNIDIYKEMIDTIIKNEGKIDILVNNFGTGRPEKDLDLVNGDEDTFFELFNYNVGSVYRLSKLIIPHMIENKGGSIVNISSVGGSIPDISRIGYGVSKSGVNNITKQIAIQYAKYGIRCNAVLPGLIATDAAMNSMPDEFRKSFLSHVPLNRIGNPEDIANSVLFFVPSEDSSYITGSILEVSGGYNLGTPQYAEFVGSKVVE.

NADP(+)-binding positions include Ser13–Ile18, Arg38, Asp63–Ala64, and Asn90. Residues Ser145 and Tyr158 each coordinate cholate. NADP(+)-binding positions include Tyr158, Lys162, and Ile191–Ala195. Catalysis depends on Tyr158, which acts as the Proton acceptor.

Belongs to the short-chain dehydrogenases/reductases (SDR) family. In terms of assembly, homotetramer.

It catalyses the reaction cholate + NADP(+) = 3alpha,12alpha-dihydroxy-7-oxo-5beta-cholanate + NADPH + H(+). It carries out the reaction chenodeoxycholate + NADP(+) = 7-oxolithocholate + NADPH + H(+). In terms of biological role, 7alpha-hydroxysteroid dehydrogenase that catalyzes the NADP(+)-dependent oxidation of the 7alpha-hydroxy group of 7alpha-hydroxysteroids, such as the major human bile acids cholate and chenodeoxycholate, to the corresponding 7-oxosteroids. Is thus liley involved in the metabolism of primary bile acids. The chain is 7alpha-hydroxysteroid dehydrogenase from Paraclostridium sordellii (Clostridium sordellii).